We begin with the raw amino-acid sequence, 214 residues long: Adenylate kinase (214 aa).

10–15 (GAGKGT) lines the ATP pocket. The segment at 30-59 (STGDMFRDHKARGTEIGKQVQAIMDAGGLV) is NMP. Residues T31, R36, 57 to 59 (GLV), 85 to 88 (GYPR), and Q92 each bind AMP. Residues 126–163 (GRRSCPRCGAVYHVSQNPPHRAGFCDRDDTALVQREDD) form an LID region. Position 127 (R127) interacts with ATP. The Zn(2+) site is built by C130 and C133. 136–137 (VY) lines the ATP pocket. C150 and D153 together coordinate Zn(2+). AMP-binding residues include R160 and R171. G199 lines the ATP pocket.

This sequence belongs to the adenylate kinase family. Monomer.

The protein localises to the cytoplasm. It catalyses the reaction AMP + ATP = 2 ADP. It functions in the pathway purine metabolism; AMP biosynthesis via salvage pathway; AMP from ADP: step 1/1. Functionally, catalyzes the reversible transfer of the terminal phosphate group between ATP and AMP. Plays an important role in cellular energy homeostasis and in adenine nucleotide metabolism. This Anaeromyxobacter sp. (strain K) protein is Adenylate kinase.